The sequence spans 225 residues: pH-response regulator palI/RIM9 homolog 2 (225 aa).

The Cytoplasmic segment spans residues 1–4 (MLVK). Residues 5-25 (IVLVVLLTLALVFECFSTISV) form a helical membrane-spanning segment. Over 26–87 (PITIGLYISE…PNHAKYALSN (62 aa)) the chain is Extracellular. A helical membrane pass occupies residues 88–108 (LLLVHVLAFVCVTILWVFGML). Over 109-120 (TCFRCIKTSRRM) the chain is Cytoplasmic. Residues 121–141 (LIIAVLWSMLTFMVTLLGFLI) form a helical membrane-spanning segment. At 142–153 (DILIFSSHVTWC) the chain is on the extracellular side. The chain crosses the membrane as a helical span at residues 154-174 (TWLTLASAFFTVLSGTVLCVM). Residues 175–225 (RRNLTYDKFLESKPEKHGVYVPLCRLNDVEELEIPWCNTMNHQALTAPTPM) lie on the Cytoplasmic side of the membrane.

The protein belongs to the palI/RIM9 family.

The protein localises to the cell membrane. Required for the proteolytic cleavage of the transcription factor RIM101 in response to alkaline ambient pH. The chain is pH-response regulator palI/RIM9 homolog 2 from Kluyveromyces lactis (strain ATCC 8585 / CBS 2359 / DSM 70799 / NBRC 1267 / NRRL Y-1140 / WM37) (Yeast).